The sequence spans 231 residues: tRNA (guanine-N(7)-)-methyltransferase (231 aa).

S-adenosyl-L-methionine-binding residues include Asp57, Glu82, Asp109, and Asp132. Asp132 is an active-site residue. Residues Lys136, Asp168, and 205–208 each bind substrate; that span reads TKFE. A disordered region spans residues 194-214; the sequence is AFVPPPPPRPQTKFERRGLRK.

Belongs to the class I-like SAM-binding methyltransferase superfamily. TrmB family.

The enzyme catalyses guanosine(46) in tRNA + S-adenosyl-L-methionine = N(7)-methylguanosine(46) in tRNA + S-adenosyl-L-homocysteine. Its pathway is tRNA modification; N(7)-methylguanine-tRNA biosynthesis. Catalyzes the formation of N(7)-methylguanine at position 46 (m7G46) in tRNA. This chain is tRNA (guanine-N(7)-)-methyltransferase, found in Halorhodospira halophila (strain DSM 244 / SL1) (Ectothiorhodospira halophila (strain DSM 244 / SL1)).